A 293-amino-acid chain; its full sequence is MFGFLNLNKPPDWTSHDCVAKVRKILKTKRVGHGGTLDPMATGVLPIAVGAATRLLAYLPENKAYRAKIQLGLSTDTDDITGKAIATCPWPDLTLEAVKPHLAEFIGNIAQIPPMYSAIHKDGRRLYELARKGEIIAVEPRQVKIDQITVLDWLEGEFPQIELDIHCGSGTYIRSLARDLGKVLAVGGTLASLTRTESCGFQLADSINLEALMVNSEGLISPRIALAHLDWISFTPERVIDWFHGRKINLTDTNVIIGSLVAVESLEAQFLGIGEIVVAEDEYYLQPKIVIQQ.

D38 functions as the Nucleophile in the catalytic mechanism.

It belongs to the pseudouridine synthase TruB family. Type 1 subfamily.

It catalyses the reaction uridine(55) in tRNA = pseudouridine(55) in tRNA. Functionally, responsible for synthesis of pseudouridine from uracil-55 in the psi GC loop of transfer RNAs. This is tRNA pseudouridine synthase B from Microcystis aeruginosa (strain NIES-843 / IAM M-2473).